Here is a 447-residue protein sequence, read N- to C-terminus: Tubulin beta-6 chain (447 aa).

Glutamine 11, glutamate 69, serine 138, glycine 142, threonine 143, glycine 144, asparagine 204, and asparagine 226 together coordinate GTP. Residue glutamate 69 participates in Mg(2+) binding. The interval 426–447 (QDATAEEEGEFDEDEELDDGMM) is disordered. The segment covering 429–447 (TAEEEGEFDEDEELDDGMM) has biased composition (acidic residues).

This sequence belongs to the tubulin family. Dimer of alpha and beta chains. A typical microtubule is a hollow water-filled tube with an outer diameter of 25 nm and an inner diameter of 15 nM. Alpha-beta heterodimers associate head-to-tail to form protofilaments running lengthwise along the microtubule wall with the beta-tubulin subunit facing the microtubule plus end conferring a structural polarity. Microtubules usually have 13 protofilaments but different protofilament numbers can be found in some organisms and specialized cells. The cofactor is Mg(2+).

It is found in the cytoplasm. Its subcellular location is the cytoskeleton. Its function is as follows. Tubulin is the major constituent of microtubules, a cylinder consisting of laterally associated linear protofilaments composed of alpha- and beta-tubulin heterodimers. Microtubules grow by the addition of GTP-tubulin dimers to the microtubule end, where a stabilizing cap forms. Below the cap, tubulin dimers are in GDP-bound state, owing to GTPase activity of alpha-tubulin. In Ectocarpus variabilis (Brown alga), this protein is Tubulin beta-6 chain (TUBB6).